Reading from the N-terminus, the 416-residue chain is Histidinol dehydrogenase (416 aa).

Residues tyrosine 117, glutamine 178, and asparagine 201 each coordinate NAD(+). 3 residues coordinate substrate: threonine 224, glutamine 246, and histidine 249. 2 residues coordinate Zn(2+): glutamine 246 and histidine 249. Active-site proton acceptor residues include glutamate 314 and histidine 315. Residues histidine 315, aspartate 348, glutamate 402, and histidine 407 each contribute to the substrate site. Zn(2+) is bound at residue aspartate 348. Residue histidine 407 coordinates Zn(2+).

The protein belongs to the histidinol dehydrogenase family. Zn(2+) serves as cofactor.

It catalyses the reaction L-histidinol + 2 NAD(+) + H2O = L-histidine + 2 NADH + 3 H(+). Its pathway is amino-acid biosynthesis; L-histidine biosynthesis; L-histidine from 5-phospho-alpha-D-ribose 1-diphosphate: step 9/9. In terms of biological role, catalyzes the sequential NAD-dependent oxidations of L-histidinol to L-histidinaldehyde and then to L-histidine. In Staphylococcus aureus (strain bovine RF122 / ET3-1), this protein is Histidinol dehydrogenase.